The sequence spans 213 residues: Adenylate kinase (213 aa).

10-15 (GAGKGT) is a binding site for ATP. The interval 30-59 (STGDMLRAAVAAGSEVGLRAKAAMESGSLV) is NMP. AMP is bound by residues Thr31, Arg36, 57 to 59 (SLV), 85 to 88 (GFPR), and Gln92. The tract at residues 126–163 (GRSSCEKCGEGYHDSFKPSAQPNVCDKCSGTLKRRADD) is LID. Arg127 contributes to the ATP binding site. Positions 130, 133, 150, and 153 each coordinate Zn(2+). Arg160 and Arg171 together coordinate AMP. An ATP-binding site is contributed by Gln199.

The protein belongs to the adenylate kinase family. As to quaternary structure, monomer.

The protein resides in the cytoplasm. It catalyses the reaction AMP + ATP = 2 ADP. Its pathway is purine metabolism; AMP biosynthesis via salvage pathway; AMP from ADP: step 1/1. Its function is as follows. Catalyzes the reversible transfer of the terminal phosphate group between ATP and AMP. Plays an important role in cellular energy homeostasis and in adenine nucleotide metabolism. The polypeptide is Adenylate kinase (Magnetococcus marinus (strain ATCC BAA-1437 / JCM 17883 / MC-1)).